Here is a 246-residue protein sequence, read N- to C-terminus: Dihydromethanopterin reductase (acceptor) (246 aa).

4Fe-4S ferredoxin-type domains lie at 150-178 (LPYA…VKRD) and 179-208 (NFVE…EGKE). Cys159, Cys162, Cys165, Cys169, Cys188, Cys191, Cys194, and Cys198 together coordinate [4Fe-4S] cluster.

In terms of assembly, homodimer. Requires [4Fe-4S] cluster as cofactor.

It carries out the reaction 5,6,7,8-tetrahydromethanopterin + A = 7,8-dihydromethanopterin + AH2. It participates in cofactor biosynthesis; 5,6,7,8-tetrahydromethanopterin biosynthesis. In terms of biological role, involved in the biosynthesis of tetrahydromethanopterin, a coenzyme used in methanogenesis. Catalyzes the reduction of dihydromethanopterin (H(2)MPT) to tetrahydromethanopterin (H(4)MPT). Ferredoxin may serve as an electron donor. The protein is Dihydromethanopterin reductase (acceptor) of Methanocaldococcus jannaschii (strain ATCC 43067 / DSM 2661 / JAL-1 / JCM 10045 / NBRC 100440) (Methanococcus jannaschii).